The primary structure comprises 370 residues: Galanin receptor type 3 (370 aa).

The Extracellular portion of the chain corresponds to methionine 1–valine 20. Asparagine 6 carries N-linked (GlcNAc...) asparagine glycosylation. A helical transmembrane segment spans residues proline 21–valine 41. Residues leucine 42–threonine 57 lie on the Cytoplasmic side of the membrane. The chain crosses the membrane as a helical span at residues aspartate 58 to phenylalanine 78. The Extracellular portion of the chain corresponds to glutamine 79–lysine 96. A disulfide bridge connects residues cysteine 95 and cysteine 172. A helical transmembrane segment spans residues threonine 97–valine 118. Residues aspartate 119–asparagine 138 lie on the Cytoplasmic side of the membrane. The chain crosses the membrane as a helical span at residues alanine 139–serine 159. Residues tyrosine 160–leucine 184 are Extracellular-facing. A helical transmembrane segment spans residues aspartate 185 to glycine 205. Residues arginine 206–alanine 236 lie on the Cytoplasmic side of the membrane. Residues methionine 237–cysteine 257 traverse the membrane as a helical segment. Topologically, residues phenylalanine 258–tryptophan 259 are extracellular. A helical membrane pass occupies residues tyrosine 260–alanine 280. The Cytoplasmic portion of the chain corresponds to tyrosine 281–glutamine 370. Cysteine 308 carries S-palmitoyl cysteine lipidation. Positions glutamine 328–glutamine 370 are disordered. Residues proline 350–glutamate 359 are compositionally biased toward basic and acidic residues.

It belongs to the G-protein coupled receptor 1 family.

Its subcellular location is the cell membrane. Receptor for the hormone galanin and spexin-1. The protein is Galanin receptor type 3 (Galr3) of Mus musculus (Mouse).